Here is a 174-residue protein sequence, read N- to C-terminus: Large ribosomal subunit protein uL10 (174 aa).

The protein belongs to the universal ribosomal protein uL10 family. In terms of assembly, part of the ribosomal stalk of the 50S ribosomal subunit. The N-terminus interacts with L11 and the large rRNA to form the base of the stalk. The C-terminus forms an elongated spine to which L12 dimers bind in a sequential fashion forming a multimeric L10(L12)X complex.

Functionally, forms part of the ribosomal stalk, playing a central role in the interaction of the ribosome with GTP-bound translation factors. This is Large ribosomal subunit protein uL10 from Pelobacter propionicus (strain DSM 2379 / NBRC 103807 / OttBd1).